The chain runs to 398 residues: Putative transposase y4qJ (398 aa).

The protein belongs to the transposase 32 family.

This chain is Putative transposase y4qJ, found in Sinorhizobium fredii (strain NBRC 101917 / NGR234).